The sequence spans 233 residues: Probable flavin reductase (233 aa).

Residues 1 to 133 (MLCSIEKIEP…NSLAQGFNQP (133 aa)) form the FAD-binding FR-type domain. 111–115 (GGTGM) contributes to the pyridine binding site.

Belongs to the Fre/LuxG FAD/NAD(P) flavoprotein oxidoreductase family.

In terms of biological role, probable flavin reductase in the luminescent systems of different marine bacteria. The chain is Probable flavin reductase (luxG) from Vibrio harveyi (Beneckea harveyi).